A 646-amino-acid chain; its full sequence is Threonine--tRNA ligase (646 aa).

In terms of domain architecture, TGS spans 1-63; the sequence is MADLSIIFPD…SSGGSIEIIT (63 aa). Residues 244–541 are catalytic; it reads DHRKLGKELG…LIEEYKGAFP (298 aa). Positions 337, 388, and 518 each coordinate Zn(2+).

Belongs to the class-II aminoacyl-tRNA synthetase family. In terms of assembly, homodimer. It depends on Zn(2+) as a cofactor.

Its subcellular location is the cytoplasm. It carries out the reaction tRNA(Thr) + L-threonine + ATP = L-threonyl-tRNA(Thr) + AMP + diphosphate + H(+). In terms of biological role, catalyzes the attachment of threonine to tRNA(Thr) in a two-step reaction: L-threonine is first activated by ATP to form Thr-AMP and then transferred to the acceptor end of tRNA(Thr). Also edits incorrectly charged L-seryl-tRNA(Thr). In Oceanobacillus iheyensis (strain DSM 14371 / CIP 107618 / JCM 11309 / KCTC 3954 / HTE831), this protein is Threonine--tRNA ligase.